The sequence spans 130 residues: MKKGTVINTQLSQVIADMGHFDLLGIGDAGMPVPEDTWKIDLAVSKNLPSFIDVLKNVLSELQVQKVYLAEEIKTENPEQLKQIQQLIDVPIAFIPHDQMKQDLSKTKAFVRTGEMTPYSNILLESGVVF.

The Proton donor role is filled by histidine 20. Substrate-binding positions include aspartate 28, histidine 97, and 119-121 (YSN).

The protein belongs to the RbsD / FucU family. RbsD subfamily. Homodecamer.

The protein resides in the cytoplasm. It carries out the reaction beta-D-ribopyranose = beta-D-ribofuranose. It participates in carbohydrate metabolism; D-ribose degradation; D-ribose 5-phosphate from beta-D-ribopyranose: step 1/2. Functionally, catalyzes the interconversion of beta-pyran and beta-furan forms of D-ribose. The sequence is that of D-ribose pyranase from Lacticaseibacillus casei (strain BL23) (Lactobacillus casei).